We begin with the raw amino-acid sequence, 269 residues long: Hydroxyethylthiazole kinase (269 aa).

Residue Met46 coordinates substrate. Residues Arg122 and Thr168 each coordinate ATP. Gly195 contributes to the substrate binding site.

Belongs to the Thz kinase family. The cofactor is Mg(2+).

The catalysed reaction is 5-(2-hydroxyethyl)-4-methylthiazole + ATP = 4-methyl-5-(2-phosphooxyethyl)-thiazole + ADP + H(+). Its pathway is cofactor biosynthesis; thiamine diphosphate biosynthesis; 4-methyl-5-(2-phosphoethyl)-thiazole from 5-(2-hydroxyethyl)-4-methylthiazole: step 1/1. Functionally, catalyzes the phosphorylation of the hydroxyl group of 4-methyl-5-beta-hydroxyethylthiazole (THZ). The protein is Hydroxyethylthiazole kinase of Geobacillus kaustophilus (strain HTA426).